The sequence spans 428 residues: Trigger factor (428 aa).

A PPIase FKBP-type domain is found at 165 to 240; the sequence is ADLIKLDAEG…VKEVKRMELP (76 aa).

The protein belongs to the FKBP-type PPIase family. Tig subfamily.

It is found in the cytoplasm. It catalyses the reaction [protein]-peptidylproline (omega=180) = [protein]-peptidylproline (omega=0). In terms of biological role, involved in protein export. Acts as a chaperone by maintaining the newly synthesized protein in an open conformation. Functions as a peptidyl-prolyl cis-trans isomerase. The chain is Trigger factor from Prosthecochloris aestuarii (strain DSM 271 / SK 413).